We begin with the raw amino-acid sequence, 344 residues long: Ion-translocating oxidoreductase complex subunit D (344 aa).

Transmembrane regions (helical) follow at residues 23 to 43 (LVLGACVPGLFTLTWLYGAGT), 44 to 64 (LLNLAWAGLVALACEAAMLAL), 80 to 100 (VTALLLAVALPPCAPWLLTLV), and 120 to 140 (PFNPAMLGYVVALVSFPLEMT). At threonine 172 the chain carries FMN phosphoryl threonine. 5 helical membrane-spanning segments follow: residues 198–218 (LGGAGGEWVNLAFLLGGLFLL), 222–242 (LFTWHAPLGMLAGLFAMSLLF), 252–272 (GSPLFHLFSGATMLGAFFIVT), 285–305 (LLFGLGVGVLTYLIRAWGGYP), and 306–326 (DGVAFAVLLMNLAAPTIDYYT).

The protein belongs to the NqrB/RnfD family. As to quaternary structure, the complex is composed of six subunits: RnfA, RnfB, RnfC, RnfD, RnfE and RnfG. FMN serves as cofactor.

The protein localises to the cell inner membrane. Its function is as follows. Part of a membrane-bound complex that couples electron transfer with translocation of ions across the membrane. The sequence is that of Ion-translocating oxidoreductase complex subunit D from Pseudomonas paraeruginosa (strain DSM 24068 / PA7) (Pseudomonas aeruginosa (strain PA7)).